Here is a 164-residue protein sequence, read N- to C-terminus: Phosphopantetheine adenylyltransferase (164 aa).

A substrate-binding site is contributed by Ser-9. Residues 9 to 10 and His-17 contribute to the ATP site; that span reads SF. 3 residues coordinate substrate: Lys-41, Val-78, and Arg-92. Residues 93 to 95, Glu-103, and 128 to 134 each bind ATP; these read GLR and SRPITAT.

This sequence belongs to the bacterial CoaD family. Homohexamer. Mg(2+) serves as cofactor.

It is found in the cytoplasm. The enzyme catalyses (R)-4'-phosphopantetheine + ATP + H(+) = 3'-dephospho-CoA + diphosphate. It participates in cofactor biosynthesis; coenzyme A biosynthesis; CoA from (R)-pantothenate: step 4/5. Its function is as follows. Reversibly transfers an adenylyl group from ATP to 4'-phosphopantetheine, yielding dephospho-CoA (dPCoA) and pyrophosphate. The chain is Phosphopantetheine adenylyltransferase from Agrobacterium fabrum (strain C58 / ATCC 33970) (Agrobacterium tumefaciens (strain C58)).